A 396-amino-acid polypeptide reads, in one-letter code: DNA excision repair protein ERCC-8 (396 aa).

WD repeat units lie at residues Asn-33–Leu-73, Cys-88–Thr-129, Gln-133–Leu-173, Ser-177–Val-216, Gln-235–Ser-274, Leu-281–Val-321, and Glu-325–Pro-363. Residues Asp-371–Gly-396 form a disordered region. Residues Ser-390, Ser-391, and Ser-392 each carry the phosphoserine modification.

Part of the CSA complex (also named DCX(ERCC8) complex), a DCX E3 ubiquitin-protein ligase complex containing ERCC8, RBX1, DDB1 and CUL4A; the CSA complex interacts with RNA polymerase II; upon UV irradiation it interacts with the COP9 signalosome and preferentially with the hyperphosphorylated form of RNA polymerase II. Interacts with ERCC6/CSB (via CIM motif); promoting recruitment to lesion-stalled RNA polymerase II (Pol II). Interacts with KIAA1530/UVSSA. Interacts with a subunit of RNA polymerase II TFIIH.

Its subcellular location is the nucleus. It is found in the chromosome. The protein resides in the nucleus matrix. It participates in protein modification; protein ubiquitination. Substrate-recognition component of the CSA complex, a DCX (DDB1-CUL4-X-box) E3 ubiquitin-protein ligase complex, involved in transcription-coupled nucleotide excision repair (TC-NER), a process during which RNA polymerase II-blocking lesions are rapidly removed from the transcribed strand of active genes. Following recruitment to lesion-stalled RNA polymerase II (Pol II), the CSA complex mediates ubiquitination of Pol II subunit POLR2A/RPB1 at 'Lys-1268', a critical TC-NER checkpoint, governing RNA Pol II stability and initiating DNA damage excision by TFIIH recruitment. The CSA complex also promotes the ubiquitination and subsequent proteasomal degradation of ERCC6/CSB in a UV-dependent manner; ERCC6 degradation is essential for the recovery of RNA synthesis after transcription-coupled repair. Also plays a role in DNA double-strand breaks (DSSBs) repair by non-homologous end joining (NHEJ). This is DNA excision repair protein ERCC-8 from Homo sapiens (Human).